The sequence spans 574 residues: Avenacosidase 1 (574 aa).

The N-terminal 55 residues, 1-55 (MALLCSALSNSTHPSFRSHIGANSENLWHLSADPAQKSKRRCNLTLSSRAARISS), are a transit peptide targeting the chloroplast. Residues Gln88, His192, and 237-238 (NE) contribute to the a beta-D-glucoside site. The active-site Proton donor is Glu238. Cys258 and Cys264 are disulfide-bonded. A beta-D-glucoside contacts are provided by residues Tyr381, Glu454, Trp505, 512–513 (EW), and Phe521. Residue Glu454 is the Nucleophile of the active site.

It belongs to the glycosyl hydrolase 1 family. Homo- and heteromultimer with P60B in a 1:1 stoichiometry. Aggregates to form the fibrillar stromacentre. Expressed in caryopses, coleoptiles, primary leaves, and etiolated and green seedlings, but not in roots.

Its subcellular location is the plastid. It localises to the chloroplast stroma. It catalyses the reaction avenacoside B + H2O = 26-desgluco-avenacoside B + D-glucose. Inhibited by N-(3-Dimethylaminopropyl)-N'-ethylcarbodiimide hydrochloride (EDC). Functionally, beta-glucosidase acting as a preformed defense system. Hydrolyzes the bisdesmosides avenacosides A and B to 26-desgluco-avenacosides exhibiting fungicidal activity. Can use beta-fucoside &gt; beta-glucoside &gt; beta-galactoside &gt; beta-xyloside as substrates, but not alpha-glycosides, beta-thioglucosides and disaccharides. The protein is Avenacosidase 1 (P60A) of Avena sativa (Oat).